A 172-amino-acid chain; its full sequence is Shikimate kinase (172 aa).

Residue 8-15 (GARASGKT) coordinates ATP.

This sequence belongs to the shikimate kinase family.

It is found in the cytoplasm. It catalyses the reaction shikimate + ATP = 3-phosphoshikimate + ADP + H(+). It functions in the pathway metabolic intermediate biosynthesis; chorismate biosynthesis; chorismate from D-erythrose 4-phosphate and phosphoenolpyruvate: step 5/7. The sequence is that of Shikimate kinase from Oleidesulfovibrio alaskensis (strain ATCC BAA-1058 / DSM 17464 / G20) (Desulfovibrio alaskensis).